The sequence spans 417 residues: Dihydroorotase (417 aa).

Zn(2+) contacts are provided by H60 and H62. Substrate-binding positions include 62–64 (HLR) and N94. Residues K138, H167, H207, and D275 each contribute to the Zn(2+) site. Position 138 is an N6-carboxylysine (K138). The active site involves D275. Residues H279 and 289-290 (AG) contribute to the substrate site.

It belongs to the metallo-dependent hydrolases superfamily. DHOase family. Class I DHOase subfamily. Zn(2+) serves as cofactor.

The catalysed reaction is (S)-dihydroorotate + H2O = N-carbamoyl-L-aspartate + H(+). It functions in the pathway pyrimidine metabolism; UMP biosynthesis via de novo pathway; (S)-dihydroorotate from bicarbonate: step 3/3. Catalyzes the reversible cyclization of carbamoyl aspartate to dihydroorotate. This chain is Dihydroorotase, found in Pyrococcus horikoshii (strain ATCC 700860 / DSM 12428 / JCM 9974 / NBRC 100139 / OT-3).